A 491-amino-acid polypeptide reads, in one-letter code: Glutamyl-tRNA(Gln) amidotransferase subunit A (491 aa).

Catalysis depends on charge relay system residues Lys78 and Ser158. Ser182 (acyl-ester intermediate) is an active-site residue.

The protein belongs to the amidase family. GatA subfamily. In terms of assembly, heterotrimer of A, B and C subunits.

It catalyses the reaction L-glutamyl-tRNA(Gln) + L-glutamine + ATP + H2O = L-glutaminyl-tRNA(Gln) + L-glutamate + ADP + phosphate + H(+). Its function is as follows. Allows the formation of correctly charged Gln-tRNA(Gln) through the transamidation of misacylated Glu-tRNA(Gln) in organisms which lack glutaminyl-tRNA synthetase. The reaction takes place in the presence of glutamine and ATP through an activated gamma-phospho-Glu-tRNA(Gln). The chain is Glutamyl-tRNA(Gln) amidotransferase subunit A from Nitrobacter hamburgensis (strain DSM 10229 / NCIMB 13809 / X14).